Consider the following 184-residue polypeptide: MKVIAVTGYKPFELGIFKNDHPGVGCIKKALHRKLTTFVEDGLEWVIISGQLGVELWAAEVVFEIQVEYPDLKLAVFTPFLEQEENWKEDNREYYEFILSQADHVDSITKRKYESPEQFKLKNQFFIEKSDALLAVYDEEKPGSPKYIVETAKKKGEIENYHSYFILFSELQDIIEEEQWNNAE.

It belongs to the UPF0398 family.

The chain is UPF0398 protein BCG9842_B3730 from Bacillus cereus (strain G9842).